The chain runs to 607 residues: MDNSYNLNEQSSWNGISSEKKKNYLASEDHGQKILSVLQSFREQNVFYDFKIIMKEEIIPCHRCVLAACSDFFRAMFEVNMKERDDGSVTITNLSSKAVKAFLDYAYTGKTRITDDNVEMFFQLSSFLQVSFLSKACSDFLIKSISLVNCLHLLSLSDSYGSAQLFSHTLYFVQHHFHLLYKSSDFLEMNFGVLQKCLESDELNVPEEEMVLKAVLTWIKYNLESRQKHLPHLITKVRLHQLSEDTLQDYLLNEEYLLKSTNCFDIIVDAIKCVQGSSGLFPDARPSTTEKYIFIHKTEENGENQYTFCYNIKTDSWKILPQSHLIDLPGSSLSSYGEKIFLTGGCKGKCCRRIRLHIAQSYHDATDQTWCYCPAKNEFFCVSAMKTPRTMHTSVMALNRLFVIGGKTRGSQDIKSLLDVESYNPLSREWTSVSPLPRGIYYPEASACQNIIYVLGSEVEIADAFNPSLDCFFKYNATTDQWSELVAEFGQFFHATLIKAVPVNCTLYICDLSTYKVYSFCPDTCVWKGEGSFECAGFNAGAIGIEDKIYILGGDYAPDEITDEVQVYHSSRSEWEEVSPMPRALTEFYCQVIQFNKYRDPWYSNHF.

The 68-residue stretch at Tyr48–Asp115 folds into the BTB domain. Positions Cys150 to Tyr250 constitute a BACK domain. Kelch repeat units follow at residues Lys291–Gly337, Lys339–Thr390, Arg400–Asn450, Ile452–Pro502, and Lys548–Phe595.

The protein is Kelch repeat and BTB domain-containing protein 3 of Mus musculus (Mouse).